The following is a 91-amino-acid chain: Large ribosomal subunit protein uL22 (91 aa).

This sequence belongs to the universal ribosomal protein uL22 family. Part of the 50S ribosomal subunit.

In terms of biological role, this protein binds specifically to 23S rRNA; its binding is stimulated by other ribosomal proteins, e.g. L4, L17, and L20. It is important during the early stages of 50S assembly. It makes multiple contacts with different domains of the 23S rRNA in the assembled 50S subunit and ribosome. Functionally, the globular domain of the protein is located near the polypeptide exit tunnel on the outside of the subunit, while an extended beta-hairpin is found that lines the wall of the exit tunnel in the center of the 70S ribosome. In Loofah witches'-broom phytoplasma, this protein is Large ribosomal subunit protein uL22 (rplV).